A 242-amino-acid chain; its full sequence is Ribosomal RNA small subunit methyltransferase G (242 aa).

Residues G79, 130-131, and Q149 each bind S-adenosyl-L-methionine; that span reads VE.

This sequence belongs to the methyltransferase superfamily. RNA methyltransferase RsmG family.

It is found in the cytoplasm. Functionally, specifically methylates the N7 position of a guanine in 16S rRNA. The polypeptide is Ribosomal RNA small subunit methyltransferase G (Mycoplasmoides gallisepticum (strain R(low / passage 15 / clone 2)) (Mycoplasma gallisepticum)).